A 74-amino-acid chain; its full sequence is Translation initiation factor IF-1 (74 aa).

Positions 1-72 (MSKQDLIEME…TKGRITYRLR (72 aa)) constitute an S1-like domain.

Belongs to the IF-1 family. Component of the 30S ribosomal translation pre-initiation complex which assembles on the 30S ribosome in the order IF-2 and IF-3, IF-1 and N-formylmethionyl-tRNA(fMet); mRNA recruitment can occur at any time during PIC assembly.

It localises to the cytoplasm. Its function is as follows. One of the essential components for the initiation of protein synthesis. Stabilizes the binding of IF-2 and IF-3 on the 30S subunit to which N-formylmethionyl-tRNA(fMet) subsequently binds. Helps modulate mRNA selection, yielding the 30S pre-initiation complex (PIC). Upon addition of the 50S ribosomal subunit IF-1, IF-2 and IF-3 are released leaving the mature 70S translation initiation complex. This is Translation initiation factor IF-1 from Trichodesmium erythraeum (strain IMS101).